Reading from the N-terminus, the 515-residue chain is tRNA pseudouridine synthase Pus10 (515 aa).

Zn(2+) contacts are provided by Cys-21 and Cys-24. Positions 42–85 (KEVTYELQKYLSHGDPAEENDTPPSKKAKIEEDTSSNEHLGNCE) form a coiled coil. The tract at residues 55–82 (GDPAEENDTPPSKKAKIEEDTSSNEHLG) is disordered. Cys-96 and Cys-99 together coordinate Zn(2+). The interval 291–304 (TPWIIDGERKIESS) is RNA binding forefinger loop. Asp-331 serves as the catalytic Nucleophile. Residues 428–443 (QKTPLRVLHRRPLASR) are RNA binding thumb loop.

Belongs to the pseudouridine synthase Pus10 family.

The protein resides in the nucleus. It localises to the cytoplasm. The protein localises to the mitochondrion. It carries out the reaction uridine(55) in tRNA = pseudouridine(55) in tRNA. The catalysed reaction is uridine(54) in tRNA = pseudouridine(54) in tRNA. In terms of biological role, protein with different functions depending on its subcellular location: involved in miRNA processing in the nucleus and acts as a tRNA pseudouridylate synthase in the cytoplasm. In the cytoplasm, acts as a pseudouridylate synthase by catalyzing synthesis of pseudouridine(54) and pseudouridine(55) from uracil-54 and uracil-55, respectively, in the psi GC loop of a subset of tRNAs. tRNA pseudouridylate synthase activity is enhanced by the presence of 1-methyladenosine at position 53-61 of tRNAs. Does not show tRNA pseudouridylate synthase activity in the nucleus. In the nucleus, promotes primary microRNAs (pri-miRNAs) processing independently of its RNA pseudouridylate synthase activity. Binds pri-miRNAs. The chain is tRNA pseudouridine synthase Pus10 from Xenopus laevis (African clawed frog).